A 449-amino-acid chain; its full sequence is Glutamyl-tRNA reductase (449 aa).

Residues threonine 49–arginine 52, serine 107, glutamate 112–glutamine 114, and glutamine 118 contribute to the substrate site. Catalysis depends on cysteine 50, which acts as the Nucleophile. An NADP(+)-binding site is contributed by glycine 187–isoleucine 192. A disordered region spans residues glutamine 418 to serine 449. Positions arginine 440–serine 449 are enriched in basic and acidic residues.

Belongs to the glutamyl-tRNA reductase family. As to quaternary structure, homodimer.

It catalyses the reaction (S)-4-amino-5-oxopentanoate + tRNA(Glu) + NADP(+) = L-glutamyl-tRNA(Glu) + NADPH + H(+). It functions in the pathway porphyrin-containing compound metabolism; protoporphyrin-IX biosynthesis; 5-aminolevulinate from L-glutamyl-tRNA(Glu): step 1/2. In terms of biological role, catalyzes the NADPH-dependent reduction of glutamyl-tRNA(Glu) to glutamate 1-semialdehyde (GSA). This Halorhodospira halophila (strain DSM 244 / SL1) (Ectothiorhodospira halophila (strain DSM 244 / SL1)) protein is Glutamyl-tRNA reductase.